The following is a 230-amino-acid chain: tRNA (guanine-N(7)-)-methyltransferase (230 aa).

The S-adenosyl-L-methionine site is built by E61, E86, D113, and D135. D135 is a catalytic residue. Residues K139, D171, and 209–212 contribute to the substrate site; that span reads TRYE.

This sequence belongs to the class I-like SAM-binding methyltransferase superfamily. TrmB family.

It catalyses the reaction guanosine(46) in tRNA + S-adenosyl-L-methionine = N(7)-methylguanosine(46) in tRNA + S-adenosyl-L-homocysteine. Its pathway is tRNA modification; N(7)-methylguanine-tRNA biosynthesis. Its function is as follows. Catalyzes the formation of N(7)-methylguanine at position 46 (m7G46) in tRNA. The sequence is that of tRNA (guanine-N(7)-)-methyltransferase from Rhizobium etli (strain ATCC 51251 / DSM 11541 / JCM 21823 / NBRC 15573 / CFN 42).